Reading from the N-terminus, the 423-residue chain is ATP-dependent Clp protease ATP-binding subunit ClpX (423 aa).

In terms of domain architecture, ClpX-type ZB spans 1-50 (MTDDTEYRCSFCGKEHHQVDDLIAGPDVRICSECVVLSCEIVEDRRNEAL). Residues Cys9, Cys12, Cys31, and Cys34 each contribute to the Zn(2+) site. Residue 126–133 (PTGCGKTY) participates in ATP binding.

This sequence belongs to the ClpX chaperone family. As to quaternary structure, component of the ClpX-ClpP complex. Forms a hexameric ring that, in the presence of ATP, binds to fourteen ClpP subunits assembled into a disk-like structure with a central cavity, resembling the structure of eukaryotic proteasomes.

ATP-dependent specificity component of the Clp protease. It directs the protease to specific substrates. Can perform chaperone functions in the absence of ClpP. This chain is ATP-dependent Clp protease ATP-binding subunit ClpX, found in Tropheryma whipplei (strain Twist) (Whipple's bacillus).